We begin with the raw amino-acid sequence, 376 residues long: Neuropeptide receptor 3 (376 aa).

Topologically, residues 1 to 29 are extracellular; it reads MEGGRNCVMTVQQWQPEYNDMNQIRAIFS. Residues 30–50 traverse the membrane as a helical segment; the sequence is LLYLLVWVGAIVGNTLVLYVL. Residues 51–66 are Cytoplasmic-facing; the sequence is TFNQVSLSVRTVFVGC. The helical transmembrane segment at 67–87 threads the bilayer; the sequence is LAGSDLLMCLFSLPITAISIF. Residues 88 to 89 lie on the Extracellular side of the membrane; that stretch reads SR. Residues 90 to 110 form a helical membrane-spanning segment; the sequence is VWVFPAIFCKLIGVFQGGTIF. A disulfide bridge links C98 with C175. Over 111–139 the chain is Cytoplasmic; that stretch reads VSSFTLTVIALDRCVLILRPNQEIVNFPR. Residues 140–160 traverse the membrane as a helical segment; the sequence is AVFIVFCIWLLGYSLALPVGI. Residues 161-197 are Extracellular-facing; sequence YSDIAVYDEICGTFCEENWPDFNPDTGRSGIRRAYGL. Residues 198-218 traverse the membrane as a helical segment; sequence SVLVLQFGIPALISSICYWMI. The Cytoplasmic segment spans residues 219 to 251; it reads SRVMSDQLARRRGHNIRPESETKLVNRKTRANR. The chain crosses the membrane as a helical span at residues 252-272; sequence MMIVMVVGFVLAWMPFNAVNL. Residues 273–284 lie on the Extracellular side of the membrane; it reads YRDLFGISKWYS. The chain crosses the membrane as a helical span at residues 285–305; it reads TVFALCHVCAMCSAVLNPIIY. At 306 to 376 the chain is on the cytoplasmic side; it reads SWFNPQFRQS…NDYRAGDQLL (71 aa).

This sequence belongs to the G-protein coupled receptor 1 family.

The protein localises to the cell membrane. Functionally, G-protein coupled receptor for flp-15 neuropeptides. Receptor activation assays suggest binding to predicted flp-15 peptides, GGPQGPLRF-NH2 and RGPSGPLRF-NH2. Likely involved in Gi/Go-coupled signaling pathways. This is Neuropeptide receptor 3 from Caenorhabditis elegans.